The primary structure comprises 176 residues: Large ribosomal subunit protein uL16 (176 aa).

The protein belongs to the universal ribosomal protein uL16 family.

The polypeptide is Large ribosomal subunit protein uL16 (Halobacterium salinarum (strain ATCC 29341 / DSM 671 / R1)).